Reading from the N-terminus, the 153-residue chain is Heavy metal-associated isoprenylated plant protein 26 (153 aa).

In terms of domain architecture, HMA spans Leu25–Glu89. A metal cation is bound by residues Cys36 and Cys39. Cys150 is modified (cysteine methyl ester). A lipid anchor (S-farnesyl cysteine) is attached at Cys150. The propeptide at Val151–Met153 is removed in mature form.

It belongs to the HIPP family. As to quaternary structure, interacts with ZHD11/HB29 and ACBP2 (via ankyrin repeats). May also interact with HB21. In terms of tissue distribution, expressed in roots, stems and flowers. Lower expression in siliques and leaves. Expressed in the vascular tissues. Detected in lateral roots, shoot apical meristem, petals of unopened flowers and weak expression in leaf vasculature.

It is found in the nucleus membrane. Its subcellular location is the cell membrane. Functionally, heavy-metal-binding protein. Binds lead, cadmium and copper. May be involved in heavy-metal transport. May be involved in cadmium transport and play a role in cadmium detoxification. The sequence is that of Heavy metal-associated isoprenylated plant protein 26 from Arabidopsis thaliana (Mouse-ear cress).